The following is a 122-amino-acid chain: Large ribosomal subunit protein uL14 (122 aa).

It belongs to the universal ribosomal protein uL14 family. As to quaternary structure, part of the 50S ribosomal subunit. Forms a cluster with proteins L3 and L19. In the 70S ribosome, L14 and L19 interact and together make contacts with the 16S rRNA in bridges B5 and B8.

Its function is as follows. Binds to 23S rRNA. Forms part of two intersubunit bridges in the 70S ribosome. In Myxococcus xanthus (strain DK1622), this protein is Large ribosomal subunit protein uL14.